Consider the following 547-residue polypeptide: Chaperonin GroEL (547 aa).

ATP contacts are provided by residues Thr-30–Pro-33, Asp-87–Thr-91, Gly-414, Asp-478–Leu-480, and Asp-494.

Belongs to the chaperonin (HSP60) family. In terms of assembly, forms a cylinder of 14 subunits composed of two heptameric rings stacked back-to-back. Interacts with the co-chaperonin GroES.

It is found in the cytoplasm. It carries out the reaction ATP + H2O + a folded polypeptide = ADP + phosphate + an unfolded polypeptide.. Its function is as follows. Together with its co-chaperonin GroES, plays an essential role in assisting protein folding. The GroEL-GroES system forms a nano-cage that allows encapsulation of the non-native substrate proteins and provides a physical environment optimized to promote and accelerate protein folding. This Desulforudis audaxviator (strain MP104C) protein is Chaperonin GroEL.